Consider the following 267-residue polypeptide: Ubiquinone biosynthesis protein COQ4 homolog, mitochondrial (267 aa).

Residues His-170, Asp-171, His-174, and Glu-186 each contribute to the Zn(2+) site.

The protein belongs to the COQ4 family. In terms of assembly, component of a multi-subunit COQ enzyme complex. Zn(2+) is required as a cofactor.

The protein localises to the mitochondrion inner membrane. It catalyses the reaction a 4-hydroxy-3-methoxy-5-(all-trans-polyprenyl)benzoate + H(+) = a 2-methoxy-6-(all-trans-polyprenyl)phenol + CO2. Its pathway is cofactor biosynthesis; ubiquinone biosynthesis. Functionally, lyase that catalyzes the C1-decarboxylation of 4-hydroxy-3-methoxy-5-(all-trans-polyprenyl)benzoic acid into 2-methoxy-6-(all-trans-polyprenyl)phenol during ubiquinone biosynthesis. This is Ubiquinone biosynthesis protein COQ4 homolog, mitochondrial from Drosophila pseudoobscura pseudoobscura (Fruit fly).